The primary structure comprises 1050 residues: Probable E3 ubiquitin-protein ligase HERC3 (1050 aa).

RCC1 repeat units lie at residues 1–51 (MLCW…FLLE), 52–101 (DGEV…ALSD), 102–154 (RGQL…ALAA), 156–207 (GQFF…ALSL), 208–259 (SGAV…VLTK), 261–311 (GGVF…AFVP), and 313–366 (SGLI…IVKQ). Residues 951 to 1050 (YKGDYSATHP…LDNYEGFSLA (100 aa)) enclose the HECT domain. Residue Cys-1018 is the Glycyl thioester intermediate of the active site.

Post-translationally, ubiquitinated; which promotes degradation by the proteasome.

It is found in the cytoplasm. Its subcellular location is the cytoplasmic vesicle. The catalysed reaction is S-ubiquitinyl-[E2 ubiquitin-conjugating enzyme]-L-cysteine + [acceptor protein]-L-lysine = [E2 ubiquitin-conjugating enzyme]-L-cysteine + N(6)-ubiquitinyl-[acceptor protein]-L-lysine.. It participates in protein modification; protein ubiquitination. Its function is as follows. E3 ubiquitin-protein ligase which accepts ubiquitin from an E2 ubiquitin-conjugating enzyme in the form of a thioester and then directly transfers the ubiquitin to targeted substrates. The polypeptide is Probable E3 ubiquitin-protein ligase HERC3 (HERC3) (Homo sapiens (Human)).